We begin with the raw amino-acid sequence, 74 residues long: Translation initiation factor IF-1 (74 aa).

Residues Met-1–Lys-72 form the S1-like domain.

Belongs to the IF-1 family. In terms of assembly, component of the 30S ribosomal translation pre-initiation complex which assembles on the 30S ribosome in the order IF-2 and IF-3, IF-1 and N-formylmethionyl-tRNA(fMet); mRNA recruitment can occur at any time during PIC assembly.

The protein localises to the cytoplasm. In terms of biological role, one of the essential components for the initiation of protein synthesis. Stabilizes the binding of IF-2 and IF-3 on the 30S subunit to which N-formylmethionyl-tRNA(fMet) subsequently binds. Helps modulate mRNA selection, yielding the 30S pre-initiation complex (PIC). Upon addition of the 50S ribosomal subunit IF-1, IF-2 and IF-3 are released leaving the mature 70S translation initiation complex. This is Translation initiation factor IF-1 from Thermotoga maritima (strain ATCC 43589 / DSM 3109 / JCM 10099 / NBRC 100826 / MSB8).